The primary structure comprises 530 residues: Berberine bridge enzyme-like 22 (530 aa).

The signal sequence occupies residues 1 to 22 (MRELFMYLFLLFLVLCVKSVYS). Cysteine 32 and cysteine 99 are oxidised to a cystine. 6 N-linked (GlcNAc...) asparagine glycosylation sites follow: asparagine 39, asparagine 47, asparagine 68, asparagine 75, asparagine 141, and asparagine 486. One can recognise an FAD-binding PCMH-type domain in the interval 77-251 (TSLKPILIVK…LSWKVKLARV (175 aa)). A cross-link (6-(S-cysteinyl)-8alpha-(pros-histidyl)-FAD (His-Cys)) is located at residues 114 to 176 (HDYEGLSYLS…KIHAFAAGIC (63 aa)).

It belongs to the oxygen-dependent FAD-linked oxidoreductase family. It depends on FAD as a cofactor. The FAD cofactor is bound via a bicovalent 6-S-cysteinyl, 8alpha-N1-histidyl FAD linkage. As to expression, accumulates in cell walls of etiolated hypocotyls.

The protein resides in the secreted. The protein localises to the cell wall. The chain is Berberine bridge enzyme-like 22 from Arabidopsis thaliana (Mouse-ear cress).